A 234-amino-acid polypeptide reads, in one-letter code: Cytochrome b (234 aa).

A run of 4 helical transmembrane segments spans residues 33 to 53, 77 to 98, 113 to 133, and 178 to 198; these read FGSLLGLCLMIQILTGLFLAM, WLIRYLHANGASMFFICLYMHV, WNIGIILLFAVMATAFMGYVL, and FFAFHFILPFIIAALVMIHLL. Residues histidine 83 and histidine 97 each coordinate heme b. Residues histidine 182 and histidine 196 each coordinate heme b. Histidine 201 lines the a ubiquinone pocket. Residues 226–234 form a helical membrane-spanning segment; it reads IKDLLGFLV.

The protein belongs to the cytochrome b family. In terms of assembly, the cytochrome bc1 complex contains 11 subunits: 3 respiratory subunits (MT-CYB, CYC1 and UQCRFS1), 2 core proteins (UQCRC1 and UQCRC2) and 6 low-molecular weight proteins (UQCRH/QCR6, UQCRB/QCR7, UQCRQ/QCR8, UQCR10/QCR9, UQCR11/QCR10 and a cleavage product of UQCRFS1). This cytochrome bc1 complex then forms a dimer. Heme b is required as a cofactor.

The protein resides in the mitochondrion inner membrane. Its function is as follows. Component of the ubiquinol-cytochrome c reductase complex (complex III or cytochrome b-c1 complex) that is part of the mitochondrial respiratory chain. The b-c1 complex mediates electron transfer from ubiquinol to cytochrome c. Contributes to the generation of a proton gradient across the mitochondrial membrane that is then used for ATP synthesis. The sequence is that of Cytochrome b (MT-CYB) from Lepus arcticus (Arctic hare).